We begin with the raw amino-acid sequence, 322 residues long: Transcription factor IIIA (322 aa).

9 C2H2-type zinc fingers span residues 12 to 36 (FVCS…YCKH), 42 to 64 (FACD…NLSH), 70 to 95 (YQCL…ERVH), 102 to 126 (YVCD…KCEH), 132 to 156 (FECQ…EKVH), 159 to 184 (YPCA…KAAH), 188 to 211 (LQCD…LFVH), 218 to 243 (FKCT…LSFH), and 249 to 273 (FICP…AVVH). Residues 272–322 (VHDPQKKKLQKKTKRGRKKKLEPKTNVSDDSELPAQLHGLSLNTSTSQNNP) form a disordered region. Residues 278 to 292 (KKLQKKTKRGRKKKL) are compositionally biased toward basic residues. Residues 312 to 322 (SLNTSTSQNNP) show a composition bias toward polar residues.

Its subcellular location is the nucleus. Functionally, involved in ribosomal large subunit biogenesis. Interacts with the internal control region (ICR) of approximately 50 bases within the 5S RNA genes, is required for correct transcription of these genes by RNA polymerase III. Also binds the transcribed 5S RNA's. The sequence is that of Transcription factor IIIA (gtf3a) from Ictalurus punctatus (Channel catfish).